Here is a 457-residue protein sequence, read N- to C-terminus: MYNCAIILAAGKGKRMKSSMPKVVHKVCGKEMVNHVIDNVRKANISDVNLVIGKGSETVKEHTRDRNVTYSMQEEQLGTGHAVICAEEFLKDKKGTVAIFTGDAPLITNETIQELFEFHNSGKYAATLISSTVQDPTGYGRIIREASGEVKKIVEHKDCNEEELKVNEINSGMYCFDIEVLLNSLKNLNNDNSQGEYYLTDVIEIMKESGEKVGAIVVPYEEIMGVNSRVQLSEAEIVMRKRINHKHMVNGVTFIDCESTYIDVDVEIGNDTIIYPGCVIQGNTTIKEECTLYSNSRICNSIIESGVVVENSVILESHVGEGTTVGPFAYIRPETKIGKSARIGDFVEIKKSTIGDNTKVSHLTYIGDAEVGSKCNFGCGTVVVNYDGQKKQKTIIGNNAFIGCNTNLISPVKVNDNTYIAAGSTITKEVPEGSLAIARSKQINKEGWLDKKGLLKK.

The segment at 1 to 229 (MYNCAIILAA…YEEIMGVNSR (229 aa)) is pyrophosphorylase. UDP-N-acetyl-alpha-D-glucosamine contacts are provided by residues 8 to 11 (LAAG), Lys-22, Gln-73, and 78 to 79 (GT). Residue Asp-103 coordinates Mg(2+). 4 residues coordinate UDP-N-acetyl-alpha-D-glucosamine: Gly-140, Glu-155, Asn-170, and Asn-227. Asn-227 contributes to the Mg(2+) binding site. A linker region spans residues 230 to 250 (VQLSEAEIVMRKRINHKHMVN). The segment at 251–457 (GVTFIDCEST…WLDKKGLLKK (207 aa)) is N-acetyltransferase. UDP-N-acetyl-alpha-D-glucosamine-binding residues include Arg-332 and Lys-350. The active-site Proton acceptor is the His-362. The UDP-N-acetyl-alpha-D-glucosamine site is built by Tyr-365 and Asn-376. Acetyl-CoA is bound by residues 385–386 (NY), Ala-422, and Arg-439.

It in the N-terminal section; belongs to the N-acetylglucosamine-1-phosphate uridyltransferase family. The protein in the C-terminal section; belongs to the transferase hexapeptide repeat family. Homotrimer. Mg(2+) is required as a cofactor.

The protein resides in the cytoplasm. The catalysed reaction is alpha-D-glucosamine 1-phosphate + acetyl-CoA = N-acetyl-alpha-D-glucosamine 1-phosphate + CoA + H(+). It carries out the reaction N-acetyl-alpha-D-glucosamine 1-phosphate + UTP + H(+) = UDP-N-acetyl-alpha-D-glucosamine + diphosphate. The protein operates within nucleotide-sugar biosynthesis; UDP-N-acetyl-alpha-D-glucosamine biosynthesis; N-acetyl-alpha-D-glucosamine 1-phosphate from alpha-D-glucosamine 6-phosphate (route II): step 2/2. Its pathway is nucleotide-sugar biosynthesis; UDP-N-acetyl-alpha-D-glucosamine biosynthesis; UDP-N-acetyl-alpha-D-glucosamine from N-acetyl-alpha-D-glucosamine 1-phosphate: step 1/1. It participates in bacterial outer membrane biogenesis; LPS lipid A biosynthesis. Its function is as follows. Catalyzes the last two sequential reactions in the de novo biosynthetic pathway for UDP-N-acetylglucosamine (UDP-GlcNAc). The C-terminal domain catalyzes the transfer of acetyl group from acetyl coenzyme A to glucosamine-1-phosphate (GlcN-1-P) to produce N-acetylglucosamine-1-phosphate (GlcNAc-1-P), which is converted into UDP-GlcNAc by the transfer of uridine 5-monophosphate (from uridine 5-triphosphate), a reaction catalyzed by the N-terminal domain. This Clostridium botulinum (strain Loch Maree / Type A3) protein is Bifunctional protein GlmU.